The chain runs to 430 residues: Ribulose bisphosphate carboxylase (430 aa).

Catalysis depends on lysine 160, which acts as the Proton acceptor. Lysine 162 is a substrate binding site. Mg(2+) is bound by residues lysine 186, aspartate 188, and glutamate 189. N6-carboxylysine is present on lysine 186. Histidine 278 acts as the Proton acceptor in catalysis. Substrate contacts are provided by residues arginine 279, histidine 311, 348–350, and 370–373; these read SGG and QAGG.

It belongs to the RuBisCO large chain family. Type III subfamily. As to quaternary structure, homodimer or homodecamer. In contrast to form I RuBisCO, the form III RuBisCO is composed solely of large subunits. It depends on Mg(2+) as a cofactor.

The catalysed reaction is 2 (2R)-3-phosphoglycerate + 2 H(+) = D-ribulose 1,5-bisphosphate + CO2 + H2O. It catalyses the reaction D-ribulose 1,5-bisphosphate + O2 = 2-phosphoglycolate + (2R)-3-phosphoglycerate + 2 H(+). In terms of biological role, catalyzes the addition of molecular CO(2) and H(2)O to ribulose 1,5-bisphosphate (RuBP), generating two molecules of 3-phosphoglycerate (3-PGA). Functions in an archaeal AMP degradation pathway, together with AMP phosphorylase and R15P isomerase. This is Ribulose bisphosphate carboxylase from Pyrococcus horikoshii (strain ATCC 700860 / DSM 12428 / JCM 9974 / NBRC 100139 / OT-3).